Reading from the N-terminus, the 621-residue chain is MPPTPPPELDLLDTEPEFAEVDPTARYGRYTEVLGKGAFKTVYKAFDQLEGLEVAWNQIKVGDILRNNDDLERLRSEVRLLKTLKHKNIIKFYNSWLDKKNNNINFITEVFTSGTLRQYRIKHKKVDVRALKKWSRQILSGLVYLHSHDPPVIHRDLKCDNIFVNGNQGEVKIGDLGLATILDNARSAHSIIGTPEFMAPELYDEEYNELVDIYAFGMCLLELVTFEYPYCECSNAAQIYKKVSDGEKPSSLAKIEDPEVRFFIEKCIAKASQRLSAQELLMDPFLRDDGEKIFYPLQSNTKASDGAGSSNSSMGYKYDRDASSMAIREHTGSFAEEHPSDRYIHSTMDPQAAAGRIITVESQMKDLNTIFLKLRIADSTGHAQNIHFPFDIEADTSISVATEMVVQLDLTDQDVTAIAEMIDAEIRAHIPDWALEESVENQGDERAHSETDSSEADDETSELRNEPNATHNGFVQEHLPSGHKYWSDSPRRNIEMSHSAVEPHIGGNMPNGILKKNDTDDTVSNLGTSVDLPNPSMIDRKSGVASVSTSPQSFDDEHIEADVSERLVNLLAQQQEELNVLRRKHKADIEVILKGVPEEHREETLTRCRLKADERNRSDKP.

One can recognise a Protein kinase domain in the interval 28 to 286 (GRYTEVLGKG…AQELLMDPFL (259 aa)). ATP contacts are provided by residues 108–111 (TEVF) and Lys158. Catalysis depends on Asp175, which acts as the Proton acceptor. 4 disordered regions span residues 438–490 (SVEN…SDSP), 501–520 (VEPH…NDTD), 527–553 (GTSV…SPQS), and 600–621 (HREE…SDKP).

The protein belongs to the protein kinase superfamily. Ser/Thr protein kinase family. WNK subfamily.

The catalysed reaction is L-seryl-[protein] + ATP = O-phospho-L-seryl-[protein] + ADP + H(+). The enzyme catalyses L-threonyl-[protein] + ATP = O-phospho-L-threonyl-[protein] + ADP + H(+). In Oryza sativa subsp. japonica (Rice), this protein is Probable serine/threonine-protein kinase WNK2 (WNK2).